The chain runs to 461 residues: MNSFSNEEFDCHFLDEGFTAKDILDQKINEVSYSDDKDAFYVADLGDILKKHLRWLKALPRVTPFYAVKCNDSRTIVKTLAAIGTGFDCASKTEIQLVQSLGVPPERIIYANPCKQVSQIKYAANNGVQMMTFDSEVELMKVARAHPKAKLVLRIATDDSKAVCRLSVKFGATLKTSRLLLERAKELDIDVIGVSFHVGSGCTDPETFVQAISDARCVFDMGAEVGFNMYLLDIGGGFPGSEDVKLKFEEITSVINPALDKYFPSDSGVRIIAEPGRYYVASAFTLAVNIIAKKLVLKEQTGSDDEEESTDRTFMYYVNDGVYGSFNCILYDHAHVKPLLQKRPKPDEKYYSSSIWGPTCDGLDRIVERCNLPEMHVGDWMLFENMGAYTVAAASTFNGFQRPTIYYVMSGPTWQLMQQIRTQDFPPGVEEPDVGPLPVSCAWESGMKRHSAACASTRINV.

Lys-69 carries the N6-(pyridoxal phosphate)lysine modification. Pyridoxal 5'-phosphate contacts are provided by residues Ser-200, Gly-237, and Glu-274–Arg-277. Ser-303 is modified (phosphoserine; by CK2). Tyr-331–Asp-332 provides a ligand contact to substrate. The active-site Proton donor; shared with dimeric partner is the Cys-360. Position 360 is an S-nitrosocysteine (Cys-360). A substrate-binding site is contributed by Asp-361. Tyr-389 is a pyridoxal 5'-phosphate binding site.

Belongs to the Orn/Lys/Arg decarboxylase class-II family. In terms of assembly, homodimer. Only the dimer is catalytically active, as the active sites are constructed of residues from both monomers. Requires pyridoxal 5'-phosphate as cofactor.

The catalysed reaction is L-ornithine + H(+) = putrescine + CO2. Its pathway is amine and polyamine biosynthesis; putrescine biosynthesis via L-ornithine pathway; putrescine from L-ornithine: step 1/1. Inhibited by antizymes (AZs) OAZ1, OAZ2 and OAZ3 in response to polyamine levels. AZs inhibit the assembly of the functional homodimer by binding to ODC monomers. Additionally, OAZ1 targets ODC monomers for ubiquitin-independent proteolytic destruction by the 26S proteasome. Functionally, catalyzes the first and rate-limiting step of polyamine biosynthesis that converts ornithine into putrescine, which is the precursor for the polyamines, spermidine and spermine. Polyamines are essential for cell proliferation and are implicated in cellular processes, ranging from DNA replication to apoptosis. In Bos taurus (Bovine), this protein is Ornithine decarboxylase (ODC1).